We begin with the raw amino-acid sequence, 382 residues long: B3 domain-containing protein Os03g0622100 (382 aa).

Residues 29–123 (CKHFLTYMVG…SFDVLIFDPS (95 aa)) constitute a DNA-binding region (TF-B3 1). Basic and acidic residues-rich tracts occupy residues 136-158 (RGFGREEKSAGAEGGGRDGDKNG) and 193-202 (QDHREEKKEG). Residues 136–222 (RGFGREEKSA…EDVDKDGEDR (87 aa)) form a disordered region. Over residues 203 to 218 (DDEDEDEDEDEDVDKD) the composition is skewed to acidic residues. Positions 261 to 363 (KVIHASHLLS…AGDRLRRRPR (103 aa)) form a DNA-binding region, TF-B3 2.

Its subcellular location is the nucleus. In Oryza sativa subsp. japonica (Rice), this protein is B3 domain-containing protein Os03g0622100.